Here is a 219-residue protein sequence, read N- to C-terminus: Ras-related protein Rab-3 (219 aa).

GTP-binding positions include 29 to 37 (GNSSVGKTS), 48 to 54 (TSAFVST), 77 to 81 (DTAGQ), 135 to 138 (NKCD), and 165 to 167 (SAK). The Effector region motif lies at 51–59 (FVSTVGIDF). The segment at 191-219 (LDKDPQQQPKGQKLEANPTQKPAQQQCNC) is disordered. The span at 207–219 (NPTQKPAQQQCNC) shows a compositional bias: polar residues. S-geranylgeranyl cysteine attachment occurs at residues cysteine 217 and cysteine 219. Cysteine methyl ester is present on cysteine 219.

This sequence belongs to the small GTPase superfamily. Rab family.

The protein resides in the cell membrane. Functionally, involved in exocytosis by regulating a late step in synaptic vesicle fusion. Could play a role in neurotransmitter release by regulating membrane flow in the nerve terminal. Plays a role in the recruitment of endophilin unc-57 to synaptic vesicles. Probably by controlling dense-core vesicle trafficking, plays a role in the AVG neuron-mediated formation of the right axon tract of the ventral nerve cord. This is Ras-related protein Rab-3 (rab-3) from Caenorhabditis elegans.